A 205-amino-acid polypeptide reads, in one-letter code: Purine catabolism protein PucB (205 aa).

Its pathway is purine metabolism; hypoxanthine degradation. Its function is as follows. Required for xanthine dehydrogenase activity. Could be involved in formation of the molybdenum cofactor required by xanthine dehydrogenase. The polypeptide is Purine catabolism protein PucB (pucB) (Bacillus subtilis (strain 168)).